Consider the following 257-residue polypeptide: MLTKRIIPCLDVKDDVVVKGVKFRNHRIIGDIIELAQKYSDAGADELVFYDIGASPDNKLLSIKWIQEIAKKINIPFCVAGGIKSVENARAILNEGADKISVNSAALARPDLIDELVYEFGSQCVVVGIDSKFIDGEFKVCQYTGSADKTVQTLLDPVSWAKEVESRGAGEIVLNCMNQDGVKGGYDLEHLREVQSNVSIPVIASGGAGEIQHFIDVFKYTEIDGALAASVFHDDIIAIPELKQELFKNNIPTRIVK.

Catalysis depends on residues D11 and D130.

Belongs to the HisA/HisF family. In terms of assembly, heterodimer of HisH and HisF.

Its subcellular location is the cytoplasm. It carries out the reaction 5-[(5-phospho-1-deoxy-D-ribulos-1-ylimino)methylamino]-1-(5-phospho-beta-D-ribosyl)imidazole-4-carboxamide + L-glutamine = D-erythro-1-(imidazol-4-yl)glycerol 3-phosphate + 5-amino-1-(5-phospho-beta-D-ribosyl)imidazole-4-carboxamide + L-glutamate + H(+). Its pathway is amino-acid biosynthesis; L-histidine biosynthesis; L-histidine from 5-phospho-alpha-D-ribose 1-diphosphate: step 5/9. Its function is as follows. IGPS catalyzes the conversion of PRFAR and glutamine to IGP, AICAR and glutamate. The HisF subunit catalyzes the cyclization activity that produces IGP and AICAR from PRFAR using the ammonia provided by the HisH subunit. In Francisella philomiragia subsp. philomiragia (strain ATCC 25017 / CCUG 19701 / FSC 153 / O#319-036), this protein is Imidazole glycerol phosphate synthase subunit HisF.